The following is a 517-amino-acid chain: MTTNIHDQRILILDFGSQYTQLVARRIREIGVYCELWSWDVEESDIRDFNPDGIILSGGPESVTEENSPRAPQYVFDSGVPVFGVCYGMQTMAEQLGGKVATSTEREFGYAAVQVTGESALFKDLEATQDVWMSHGDKVVEIPSDFVKIAETETCPYAAMANEEKKYYGVQFHPEVTHTKNGMKMLENFVLNVCGCEGLWTSASIIEDAVARIKEQVGDDEVILGLSGGVDSSVVAMLAHRAIGDKLTCVFVDNGLLRLNEADQVMEMFGNKFGLNIVHVNAEQRFLDALEGESDPETKRKIIGHVFVDIFDEESKKLKNAKWLAQGTIYPDVIESAASKTGKAHVIKSHHNVGGLPDDMEMGLVEPLRELFKDEVRKIGLELGLPYNMLYRHPFPGPGLGVRVLGEIKKEYCDLLRRADAIFIEELHNADLYNKVSQAFTVFLPVRSVGVMGDGRKYDWVVSLRAVETIDFMTAHWAHLPYDFLGKVSNRIINEVNGISRVVYDISGKPPATIEWE.

A Glutamine amidotransferase type-1 domain is found at 9 to 199 (RILILDFGSQ…VLNVCGCEGL (191 aa)). The Nucleophile role is filled by Cys86. Active-site residues include His173 and Glu175. A GMPS ATP-PPase domain is found at 200–392 (WTSASIIEDA…LGLPYNMLYR (193 aa)). 227–233 (SGGVDSS) serves as a coordination point for ATP.

Homodimer.

It catalyses the reaction XMP + L-glutamine + ATP + H2O = GMP + L-glutamate + AMP + diphosphate + 2 H(+). It functions in the pathway purine metabolism; GMP biosynthesis; GMP from XMP (L-Gln route): step 1/1. Functionally, catalyzes the synthesis of GMP from XMP. This chain is GMP synthase [glutamine-hydrolyzing], found in Aliivibrio fischeri (strain ATCC 700601 / ES114) (Vibrio fischeri).